The chain runs to 432 residues: Adenylosuccinate synthetase (432 aa).

Residues 13-19 and 41-43 contribute to the GTP site; these read GDEGKGK and GHT. The active-site Proton acceptor is D14. Residues D14 and G41 each coordinate Mg(2+). IMP is bound by residues 14–17, 39–42, T130, R144, Q225, T240, and R304; these read DEGK and NAGH. The active-site Proton donor is the H42. 300–306 lines the substrate pocket; that stretch reads ATTGRRR. GTP-binding positions include R306, 332 to 334, and 415 to 417; these read KLD and STG.

This sequence belongs to the adenylosuccinate synthetase family. In terms of assembly, homodimer. Mg(2+) is required as a cofactor.

It is found in the cytoplasm. The enzyme catalyses IMP + L-aspartate + GTP = N(6)-(1,2-dicarboxyethyl)-AMP + GDP + phosphate + 2 H(+). It functions in the pathway purine metabolism; AMP biosynthesis via de novo pathway; AMP from IMP: step 1/2. Its function is as follows. Plays an important role in the de novo pathway of purine nucleotide biosynthesis. Catalyzes the first committed step in the biosynthesis of AMP from IMP. This Sodalis glossinidius (strain morsitans) protein is Adenylosuccinate synthetase.